The sequence spans 89 residues: Acyl carrier protein MbtL (89 aa).

The region spanning 8–83 (NHVSAELLGI…DLQAAIAAEP (76 aa)) is the Carrier domain. Serine 43 carries the post-translational modification O-(pantetheine 4'-phosphoryl)serine.

In terms of processing, 4'-phosphopantetheine is transferred from CoA to a specific serine of apo-ACP, leading to the activated holo-ACP form.

The protein resides in the cytoplasm. The protein operates within siderophore biosynthesis; mycobactin biosynthesis. Acyl carrier protein involved in the formation of acyl-S-ACP intermediates within the mycobactin biosynthesis process. In Mycolicibacterium paratuberculosis (strain ATCC BAA-968 / K-10) (Mycobacterium paratuberculosis), this protein is Acyl carrier protein MbtL (mbtL).